The chain runs to 315 residues: Beta-ketoacyl-[acyl-carrier-protein] synthase III (315 aa).

Residues Cys-115 and His-244 contribute to the active site. Residues 245-249 (QANAR) are ACP-binding. Asn-274 is an active-site residue.

Belongs to the thiolase-like superfamily. FabH family. In terms of assembly, homodimer.

The protein resides in the cytoplasm. It catalyses the reaction malonyl-[ACP] + acetyl-CoA + H(+) = 3-oxobutanoyl-[ACP] + CO2 + CoA. It participates in lipid metabolism; fatty acid biosynthesis. In terms of biological role, catalyzes the condensation reaction of fatty acid synthesis by the addition to an acyl acceptor of two carbons from malonyl-ACP. Catalyzes the first condensation reaction which initiates fatty acid synthesis and may therefore play a role in governing the total rate of fatty acid production. Possesses both acetoacetyl-ACP synthase and acetyl transacylase activities. Its substrate specificity determines the biosynthesis of branched-chain and/or straight-chain of fatty acids. The chain is Beta-ketoacyl-[acyl-carrier-protein] synthase III from Rubrobacter xylanophilus (strain DSM 9941 / JCM 11954 / NBRC 16129 / PRD-1).